Reading from the N-terminus, the 937-residue chain is Hyphally-regulated protein (937 aa).

A signal peptide spans 1 to 20; the sequence is MKVVSNFIFTILLTLNLSAA. Asn-16 carries an N-linked (GlcNAc...) asparagine glycan. The chain crosses the membrane as a helical span at residues 42–62; sequence VHSGATWAILGTTLCSFFGGL. Asn-236 carries an N-linked (GlcNAc...) asparagine glycan. The disordered stretch occupies residues 332–483; sequence SAPESESDLN…QSITSSPGQS (152 aa). A compositionally biased stretch (low complexity) spans 344–392; the sequence is TTSSIETSSYSSAATESSVVSESSSAVDSLTSSSLSSKSESSDVVSSTT. Residues 393–414 show a composition bias toward polar residues; the sequence is NIESSSTAIETTMNSESSTDAG. Residues 415–475 are compositionally biased toward low complexity; the sequence is SSSISQSESS…SNALSSTEQS (61 aa). N-linked (GlcNAc...) asparagine glycosylation is found at Asn-449, Asn-488, Asn-580, Asn-585, Asn-595, and Asn-603. Low complexity predominate over residues 567-590; the sequence is DATTTTTTSTGGDNSTGGNESGSN. The interval 567–857 is disordered; that stretch reads DATTTTTTST…VANPVTTSTE (291 aa). The segment covering 591 to 609 has biased composition (gly residues); it reads HGPGNGSTEGSGNGSGAGS. Copy 1 of the repeat occupies 610-613; sequence NEGS. A 7 X 4 AA repeats of N-E-G-S region spans residues 610-753; it reads NEGSQSGPNN…GAGNGSNEGS (144 aa). N-linked (GlcNAc...) asparagine glycans are attached at residues Asn-619, Asn-631, Asn-641, and Asn-649. Composition is skewed to gly residues over residues 619–631 and 641–665; these read NGSG…GSNN and NGSG…GSGS. 4 repeat units span residues 666-669, 680-683, 690-693, and 698-701. The span at 666-682 shows a compositional bias: low complexity; sequence NEGSQSGSGSQPGPNEG. Gly residues predominate over residues 699 to 725; sequence EGSGSGSGSGSNNGSGSGSQSGSGSGS. The N-linked (GlcNAc...) asparagine glycan is linked to Asn-711. The span at 726 to 742 shows a compositional bias: low complexity; sequence QSGSESGSNSGSNEGSN. Copy 6 of the repeat occupies 738–741; the sequence is NEGS. The span at 743-801 shows a compositional bias: gly residues; sequence PGAGNGSNEGSGQGSGNGSEAGSGQGSGPNNGSGSGHNDGSGSGSNQGSNPGAGSGSGS. Residue Asn-747 is glycosylated (N-linked (GlcNAc...) asparagine). The stretch at 750–753 is repeat 7; it reads NEGS. N-linked (GlcNAc...) asparagine glycans are attached at residues Asn-759 and Asn-773. Low complexity predominate over residues 802–814; sequence ESGSKAGSHSGSN. Residues 817–829 are compositionally biased toward basic and acidic residues; that stretch reads AKTDSIEGFHTES. The span at 841–851 shows a compositional bias: polar residues; sequence ATVTGNSVANP. Residues Asn-897 and Asn-913 are each glycosylated (N-linked (GlcNAc...) asparagine). Asn-913 carries the GPI-anchor amidated asparagine lipid modification. The propeptide at 914–937 is removed in mature form; sequence GSSIVTGGKSILFGLIVSMVVLFM.

It localises to the cell membrane. The protein localises to the secreted. The protein resides in the cell wall. Nonessential component of the hyphal cell wall. The sequence is that of Hyphally-regulated protein (HYR1) from Candida albicans (Yeast).